Consider the following 348-residue polypeptide: Ion-translocating oxidoreductase complex subunit D (348 aa).

Transmembrane regions (helical) follow at residues 20–39 (LMKW…TYFF), 72–91 (ALRD…AIPP), and 120–140 (PFNP…VQMT). At threonine 187 the chain carries FMN phosphoryl threonine. The next 5 membrane-spanning stretches (helical) occupy residues 214–234 (LAGV…LVLI), 241–261 (WHIP…FLMF), 266–286 (TASP…FFIA), 300–320 (LVFG…GGFP), and 321–341 (DGVA…DYYT).

It belongs to the NqrB/RnfD family. The complex is composed of six subunits: RnfA, RnfB, RnfC, RnfD, RnfE and RnfG. It depends on FMN as a cofactor.

Its subcellular location is the cell inner membrane. In terms of biological role, part of a membrane-bound complex that couples electron transfer with translocation of ions across the membrane. The chain is Ion-translocating oxidoreductase complex subunit D from Vibrio atlanticus (strain LGP32) (Vibrio splendidus (strain Mel32)).